The following is a 232-amino-acid chain: Large ribosomal subunit protein uL1 (232 aa).

The protein belongs to the universal ribosomal protein uL1 family. In terms of assembly, part of the 50S ribosomal subunit.

Binds directly to 23S rRNA. The L1 stalk is quite mobile in the ribosome, and is involved in E site tRNA release. In terms of biological role, protein L1 is also a translational repressor protein, it controls the translation of the L11 operon by binding to its mRNA. The sequence is that of Large ribosomal subunit protein uL1 from Paraburkholderia xenovorans (strain LB400).